A 291-amino-acid chain; its full sequence is Probable cell wall amidase LytH (291 aa).

The first 40 residues, 1-40 (MKKIDSWLTKHGLKNRLTLVVIVIFIIFLILLFMFVNLSD), serve as a signal peptide directing secretion. The region spanning 41–105 (EDTGQITITE…WVAGWHTNLN (65 aa)) is the SH3b domain. In terms of domain architecture, MurNAc-LAA spans 122 to 286 (IVLDPGHGGS…VEQAIVDGLK (165 aa)). The disordered stretch occupies residues 123-147 (VLDPGHGGSDQGASSSTPSKSLEKN). A compositionally biased stretch (polar residues) spans 133–142 (QGASSSTPSK).

The protein belongs to the N-acetylmuramoyl-L-alanine amidase 3 family.

Its subcellular location is the secreted. Its function is as follows. Probably involved in cell-wall metabolism. The protein is Probable cell wall amidase LytH (lytH) of Staphylococcus epidermidis (strain ATCC 12228 / FDA PCI 1200).